The primary structure comprises 70 residues: Cytochrome c oxidase subunit 8B, mitochondrial (70 aa).

Residues 1 to 24 (MSRLAPPLRLLQAPLKCWAVPKAH) constitute a mitochondrion transit peptide. The Mitochondrial matrix segment spans residues 25 to 35 (VSAKPARTPTS). Residues 36–59 (PMEQAVGLSVMFVSFLVPSGWVLS) form a helical membrane-spanning segment. Residues 60-70 (HLESYKKSSTT) are Mitochondrial intermembrane-facing.

It belongs to the cytochrome c oxidase VIII family. In terms of assembly, component of the cytochrome c oxidase (complex IV, CIV), a multisubunit enzyme composed of 14 subunits. The complex is composed of a catalytic core of 3 subunits MT-CO1, MT-CO2 and MT-CO3, encoded in the mitochondrial DNA, and 11 supernumerary subunits COX4I, COX5A, COX5B, COX6A, COX6B, COX6C, COX7A, COX7B, COX7C, COX8 and NDUFA4, which are encoded in the nuclear genome. The complex exists as a monomer or a dimer and forms supercomplexes (SCs) in the inner mitochondrial membrane with NADH-ubiquinone oxidoreductase (complex I, CI) and ubiquinol-cytochrome c oxidoreductase (cytochrome b-c1 complex, complex III, CIII), resulting in different assemblies (supercomplex SCI(1)III(2)IV(1) and megacomplex MCI(2)III(2)IV(2)).

The protein localises to the mitochondrion inner membrane. The protein operates within energy metabolism; oxidative phosphorylation. Component of the cytochrome c oxidase, the last enzyme in the mitochondrial electron transport chain which drives oxidative phosphorylation. The respiratory chain contains 3 multisubunit complexes succinate dehydrogenase (complex II, CII), ubiquinol-cytochrome c oxidoreductase (cytochrome b-c1 complex, complex III, CIII) and cytochrome c oxidase (complex IV, CIV), that cooperate to transfer electrons derived from NADH and succinate to molecular oxygen, creating an electrochemical gradient over the inner membrane that drives transmembrane transport and the ATP synthase. Cytochrome c oxidase is the component of the respiratory chain that catalyzes the reduction of oxygen to water. Electrons originating from reduced cytochrome c in the intermembrane space (IMS) are transferred via the dinuclear copper A center (CU(A)) of subunit 2 and heme A of subunit 1 to the active site in subunit 1, a binuclear center (BNC) formed by heme A3 and copper B (CU(B)). The BNC reduces molecular oxygen to 2 water molecules using 4 electrons from cytochrome c in the IMS and 4 protons from the mitochondrial matrix. In Carlito syrichta (Philippine tarsier), this protein is Cytochrome c oxidase subunit 8B, mitochondrial (COX8B).